A 350-amino-acid polypeptide reads, in one-letter code: Casein kinase II subunit alpha' (350 aa).

Tyrosine 13 is subject to Phosphotyrosine. A phosphoserine mark is found at serine 18 and serine 21. The 286-residue stretch at 40–325 (YQLVRKLGRG…AKEAMEHPYF (286 aa)) folds into the Protein kinase domain. ATP contacts are provided by residues 46 to 54 (LGRGKYSEV) and lysine 69. N6-acetyllysine is present on lysine 97. The active-site Proton acceptor is the aspartate 157. Serine 288 is subject to Phosphoserine.

Belongs to the protein kinase superfamily. Ser/Thr protein kinase family. CK2 subfamily. As to quaternary structure, heterotetramer composed of two catalytic subunits (alpha chain and/or alpha' chain) and two regulatory subunits (beta chains). The tetramer can exist as a combination of 2 alpha/2 beta, 2 alpha'/2 beta or 1 alpha/1 alpha'/2 beta subunits. Also part of a CK2-SPT16-SSRP1 complex composed of SSRP1, SUPT16H, CSNK2A1, CSNK2A2 and CSNK2B, which forms following UV irradiation. Interacts with RNPS1. Interacts with CSNK2A2IP (via C-terminus). Interacts with SIRT6; preventing CSNK2A2 localization to the nucleus. Interacts with HIRIP3. In terms of tissue distribution, highly expressed in brain, testis and mature epididymal spermatozoa. Weakly expressed in kidney, liver, lung, spleen and thymus (at protein level).

Its subcellular location is the nucleus. It localises to the cytoplasm. It catalyses the reaction L-seryl-[protein] + ATP = O-phospho-L-seryl-[protein] + ADP + H(+). The enzyme catalyses L-threonyl-[protein] + ATP = O-phospho-L-threonyl-[protein] + ADP + H(+). With respect to regulation, constitutively active protein kinase whose activity is not directly affected by phosphorylation. Seems to be regulated by level of expression and localization. Functionally, catalytic subunit of a constitutively active serine/threonine-protein kinase complex that phosphorylates a large number of substrates containing acidic residues C-terminal to the phosphorylated serine or threonine. Regulates numerous cellular processes, such as cell cycle progression, apoptosis and transcription, as well as viral infection. May act as a regulatory node which integrates and coordinates numerous signals leading to an appropriate cellular response. During mitosis, functions as a component of the p53/TP53-dependent spindle assembly checkpoint (SAC) that maintains cyclin-B-CDK1 activity and G2 arrest in response to spindle damage. Also required for p53/TP53-mediated apoptosis, phosphorylating 'Ser-392' of p53/TP53 following UV irradiation. Phosphorylates a number of DNA repair proteins in response to DNA damage, such as MDC1, RAD9A, RAD51 and HTATSF1, promoting their recruitment to DNA damage sites. Can also negatively regulate apoptosis. Phosphorylates the caspases CASP9 and CASP2 and the apoptotic regulator NOL3. Phosphorylation protects CASP9 from cleavage and activation by CASP8, and inhibits the dimerization of CASP2 and activation of CASP8. Regulates transcription by direct phosphorylation of RNA polymerases I, II, III and IV. Also phosphorylates and regulates numerous transcription factors including NF-kappa-B, STAT1, CREB1, IRF1, IRF2, ATF1, SRF, MAX, JUN, FOS, MYC and MYB. Phosphorylates Hsp90 and its co-chaperones FKBP4 and CDC37, which is essential for chaperone function. Regulates Wnt signaling by phosphorylating CTNNB1 and the transcription factor LEF1. Acts as an ectokinase that phosphorylates several extracellular proteins. May phosphorylate histone H2A on 'Ser-1'. This is Casein kinase II subunit alpha' (Csnk2a2) from Mus musculus (Mouse).